Reading from the N-terminus, the 146-residue chain is MMYKILCLSLLVAAVARDQVDVKDCANHEIKKVLVPGCHGSEPCIIHRGKPFQLEAVFEANQNTKTAKIEIKASIDGLEVDVPGIDPNACHYMKCPLVKGQQYDIKYTWNVPKIAPKSENVVVTVKVMGDDGVLACAIATHAKIRD.

The signal sequence occupies residues 1-17 (MMYKILCLSLLVAAVAR). 3 disulfide bridges follow: cysteine 25–cysteine 136, cysteine 38–cysteine 44, and cysteine 90–cysteine 95.

It belongs to the NPC2 family.

The protein resides in the secreted. The sequence is that of Mite group 2 allergen Der p 2 (DERP2) from Dermatophagoides pteronyssinus (European house dust mite).